Reading from the N-terminus, the 267-residue chain is Formamidopyrimidine-DNA glycosylase (267 aa).

The active-site Schiff-base intermediate with DNA is P2. E3 functions as the Proton donor in the catalytic mechanism. The Proton donor; for beta-elimination activity role is filled by K53. Residues H82 and R100 each coordinate DNA. Residues 230 to 264 form an FPG-type zinc finger; sequence AVYGREGLPCPACGRPVERRVVAGRGTHFCPTCQG. The Proton donor; for delta-elimination activity role is filled by R254.

The protein belongs to the FPG family. As to quaternary structure, monomer. It depends on Zn(2+) as a cofactor.

The enzyme catalyses Hydrolysis of DNA containing ring-opened 7-methylguanine residues, releasing 2,6-diamino-4-hydroxy-5-(N-methyl)formamidopyrimidine.. It catalyses the reaction 2'-deoxyribonucleotide-(2'-deoxyribose 5'-phosphate)-2'-deoxyribonucleotide-DNA = a 3'-end 2'-deoxyribonucleotide-(2,3-dehydro-2,3-deoxyribose 5'-phosphate)-DNA + a 5'-end 5'-phospho-2'-deoxyribonucleoside-DNA + H(+). Functionally, involved in base excision repair of DNA damaged by oxidation or by mutagenic agents. Acts as a DNA glycosylase that recognizes and removes damaged bases. Has a preference for oxidized purines, such as 7,8-dihydro-8-oxoguanine (8-oxoG). Has AP (apurinic/apyrimidinic) lyase activity and introduces nicks in the DNA strand. Cleaves the DNA backbone by beta-delta elimination to generate a single-strand break at the site of the removed base with both 3'- and 5'-phosphates. In Thermus thermophilus (strain ATCC BAA-163 / DSM 7039 / HB27), this protein is Formamidopyrimidine-DNA glycosylase.